The primary structure comprises 41 residues: uncharacterized protein (41 aa).

Residues 1 to 12 (MTRNVVRQEFEA) show a composition bias toward basic and acidic residues. The disordered stretch occupies residues 1 to 23 (MTRNVVRQEFEAPGKPQDSSQQD).

This is an uncharacterized protein from Homo sapiens (Human).